The chain runs to 216 residues: Probable nicotinate-nucleotide adenylyltransferase (216 aa).

This sequence belongs to the NadD family.

The enzyme catalyses nicotinate beta-D-ribonucleotide + ATP + H(+) = deamido-NAD(+) + diphosphate. It participates in cofactor biosynthesis; NAD(+) biosynthesis; deamido-NAD(+) from nicotinate D-ribonucleotide: step 1/1. Catalyzes the reversible adenylation of nicotinate mononucleotide (NaMN) to nicotinic acid adenine dinucleotide (NaAD). In Klebsiella pneumoniae (strain 342), this protein is Probable nicotinate-nucleotide adenylyltransferase.